The sequence spans 899 residues: Translation initiation factor IF-2 (899 aa).

2 disordered regions span residues 94–167 (TFTK…VVVK) and 259–309 (FNQE…HGFE). Positions 107-121 (AKARQETEERTRPQE) are enriched in basic and acidic residues. Low complexity predominate over residues 147-164 (RAAQQKETAKTTSTTTEV). A tr-type G domain is found at 399 to 568 (TRPPVVTIMG…LIQSELMELK (170 aa)). The segment at 408–415 (GHVDHGKT) is G1. 408–415 (GHVDHGKT) is a GTP binding site. The interval 433–437 (GITQH) is G2. Residues 454–457 (DTPG) form a G3 region. Residues 454 to 458 (DTPGH) and 508 to 511 (NKMD) each bind GTP. The tract at residues 508-511 (NKMD) is G4. The G5 stretch occupies residues 544–546 (SAH).

This sequence belongs to the TRAFAC class translation factor GTPase superfamily. Classic translation factor GTPase family. IF-2 subfamily.

It localises to the cytoplasm. One of the essential components for the initiation of protein synthesis. Protects formylmethionyl-tRNA from spontaneous hydrolysis and promotes its binding to the 30S ribosomal subunits. Also involved in the hydrolysis of GTP during the formation of the 70S ribosomal complex. This is Translation initiation factor IF-2 from Acinetobacter baylyi (strain ATCC 33305 / BD413 / ADP1).